We begin with the raw amino-acid sequence, 296 residues long: 4-hydroxy-tetrahydrodipicolinate synthase (296 aa).

Threonine 50 lines the pyruvate pocket. The active-site Proton donor/acceptor is the tyrosine 138. Lysine 166 acts as the Schiff-base intermediate with substrate in catalysis. Isoleucine 208 contacts pyruvate.

Belongs to the DapA family. In terms of assembly, homotetramer; dimer of dimers.

The protein resides in the cytoplasm. It carries out the reaction L-aspartate 4-semialdehyde + pyruvate = (2S,4S)-4-hydroxy-2,3,4,5-tetrahydrodipicolinate + H2O + H(+). It participates in amino-acid biosynthesis; L-lysine biosynthesis via DAP pathway; (S)-tetrahydrodipicolinate from L-aspartate: step 3/4. Its function is as follows. Catalyzes the condensation of (S)-aspartate-beta-semialdehyde [(S)-ASA] and pyruvate to 4-hydroxy-tetrahydrodipicolinate (HTPA). The chain is 4-hydroxy-tetrahydrodipicolinate synthase from Ruthia magnifica subsp. Calyptogena magnifica.